Here is a 183-residue protein sequence, read N- to C-terminus: Adenine phosphoribosyltransferase (183 aa).

Belongs to the purine/pyrimidine phosphoribosyltransferase family. In terms of assembly, homodimer.

The protein resides in the cytoplasm. It carries out the reaction AMP + diphosphate = 5-phospho-alpha-D-ribose 1-diphosphate + adenine. Its pathway is purine metabolism; AMP biosynthesis via salvage pathway; AMP from adenine: step 1/1. In terms of biological role, catalyzes a salvage reaction resulting in the formation of AMP, that is energically less costly than de novo synthesis. This Citrobacter koseri (strain ATCC BAA-895 / CDC 4225-83 / SGSC4696) protein is Adenine phosphoribosyltransferase.